The chain runs to 158 residues: MGIQHKLDVFIVSENIAIKDANLLNGDSYGCTIKLKLNTKKSVRFVVLLEPEWIDEIKPMYMKLNGVSVDLKLDYKDAIKRIYSVDLVLYSDSVIHLFSDTDERYTCEYPTIKVNMIKKYYHVQHRGTTCVHIESPINVSDKYWFMKRDGWYVDRTHS.

This sequence belongs to the poxviridae C7 protein family.

Plays a role for multiplication of the virus in different cell types. This is Probable host range protein 2-1 from Rabbit fibroma virus (strain Kasza) (RFV).